We begin with the raw amino-acid sequence, 61 residues long: Temporin-1Tb (61 aa).

A signal peptide spans 1-22; the sequence is MFTLKKSLLLLFFLGTINLSLC. A propeptide spanning residues 23-44 is cleaved from the precursor; it reads EEERNAEEERRDEPDERDVQVE. The residue at position 59 (leucine 59) is a Leucine amide.

Belongs to the frog skin active peptide (FSAP) family. Temporin subfamily. As to quaternary structure, homo-oligomerizes in membranes as homodimers, homotrimers, or even homotetramers. Oligomerizes in presence of LPS. In Gram-positive bacterial mimetic membranes, the aggregation is weakly pronounced, and penetration proceeds more rapidly and is deeper than in Gram-negative bacterial mimetic membranes where aggregation is high. Homo-oligomerization is prevented by temporin-L. As to expression, expressed by the skin glands.

It is found in the secreted. The protein localises to the target cell membrane. It localises to the target cell. Its subcellular location is the target cell cytoplasm. Functionally, amphipathic alpha-helical antimicrobial peptide with potent activity against Gram-positive bacteria, weak activity against Gram-negative bacteria, and moderate activity against fungi. Mainly acts by causing membrane permeabilization, but is unable to forme pore-like openings. Is also able to penetrate eukaryotic cells (keratinocytes), and kill intracellular S.aureus (both wild-type and MRSA) without injuring host cells. Shows inhibitory effect on biofilm formation of Gram-positive bacteria, but not of Gram-negative bacteria. Shows antiviral activity against herpes simplex virus 1 (HSV-1) by disrupting the viral envelope. Also displays anti-leishmania activity by damaging parasite membrane. Does not show hemolytic activity. Acts synergistically with temporin-L that improves temporin-1Tb activity by preventing its self-association in lipopolysaccharides (LPS). In vitro, promotes cell migration and wound healing. The sequence is that of Temporin-1Tb from Rana temporaria (European common frog).